The chain runs to 284 residues: D-tagatose-1,6-bisphosphate aldolase subunit GatY (284 aa).

Aspartate 82 acts as the Proton donor in catalysis. Residues histidine 83 and histidine 180 each contribute to the Zn(2+) site. Glycine 181 lines the dihydroxyacetone phosphate pocket. Zn(2+) is bound at residue histidine 208. Residues 209-211 (GAS) and 230-233 (NVAT) contribute to the dihydroxyacetone phosphate site.

The protein belongs to the class II fructose-bisphosphate aldolase family. TagBP aldolase GatY subfamily. In terms of assembly, forms a complex with GatZ. The cofactor is Zn(2+).

It carries out the reaction D-tagatofuranose 1,6-bisphosphate = D-glyceraldehyde 3-phosphate + dihydroxyacetone phosphate. It participates in carbohydrate metabolism; D-tagatose 6-phosphate degradation; D-glyceraldehyde 3-phosphate and glycerone phosphate from D-tagatose 6-phosphate: step 2/2. Catalytic subunit of the tagatose-1,6-bisphosphate aldolase GatYZ, which catalyzes the reversible aldol condensation of dihydroxyacetone phosphate (DHAP or glycerone-phosphate) with glyceraldehyde 3-phosphate (G3P) to produce tagatose 1,6-bisphosphate (TBP). Requires GatZ subunit for full activity and stability. Is involved in the catabolism of galactitol. This chain is D-tagatose-1,6-bisphosphate aldolase subunit GatY, found in Shigella flexneri.